Here is a 619-residue protein sequence, read N- to C-terminus: DNA mismatch repair protein MutL (619 aa).

Residues 364-375 (EPASAREPAAPR) show a composition bias toward low complexity. Residues 364–399 (EPASAREPAAPRYSTSSGATGGRQPAASWPHAQPGY) are disordered.

The protein belongs to the DNA mismatch repair MutL/HexB family.

Its function is as follows. This protein is involved in the repair of mismatches in DNA. It is required for dam-dependent methyl-directed DNA mismatch repair. May act as a 'molecular matchmaker', a protein that promotes the formation of a stable complex between two or more DNA-binding proteins in an ATP-dependent manner without itself being part of a final effector complex. The polypeptide is DNA mismatch repair protein MutL (Citrobacter koseri (strain ATCC BAA-895 / CDC 4225-83 / SGSC4696)).